A 209-amino-acid chain; its full sequence is Glycerol-3-phosphate acyltransferase (209 aa).

A run of 5 helical transmembrane segments spans residues 4 to 24 (IAIGMIIFAYLCGSVSNAILI), 53 to 75 (LAAAGVMVFDVLKGMIPVWIGYG), 80 to 102 (PFWLGLVAIAACLGHIYPIFFHF), 112 to 132 (LGAIAPIGYDLSGLMIGTWLL), and 138 to 158 (GYSSLGAIVSALIAPFYVWWF).

Belongs to the PlsY family. Probably interacts with PlsX.

It is found in the cell inner membrane. The enzyme catalyses an acyl phosphate + sn-glycerol 3-phosphate = a 1-acyl-sn-glycero-3-phosphate + phosphate. The protein operates within lipid metabolism; phospholipid metabolism. In terms of biological role, catalyzes the transfer of an acyl group from acyl-phosphate (acyl-PO(4)) to glycerol-3-phosphate (G3P) to form lysophosphatidic acid (LPA). This enzyme utilizes acyl-phosphate as fatty acyl donor, but not acyl-CoA or acyl-ACP. This Sodalis glossinidius (strain morsitans) protein is Glycerol-3-phosphate acyltransferase.